Consider the following 446-residue polypeptide: Glutamine synthetase (446 aa).

Positions 14 to 107 (NNVKFLRFQF…IICDVYRKNG (94 aa)) constitute a GS beta-grasp domain. The GS catalytic domain maps to 114-446 (PRGCLKRVLA…DWEFNKYVRI (333 aa)). 2 residues coordinate Mg(2+): glutamate 138 and glutamate 140. Glutamate 187 is a binding site for ATP. Mg(2+) is bound by residues glutamate 192 and glutamate 199. L-glutamate contacts are provided by residues 243–244 (NG) and glycine 244. Residue histidine 248 participates in Mg(2+) binding. Residue serine 252 coordinates ATP. L-glutamate-binding residues include arginine 301, glutamate 307, and arginine 319. Arginine 319, arginine 324, and lysine 331 together coordinate ATP. Glutamate 336 is a Mg(2+) binding site. Residue arginine 338 coordinates L-glutamate.

The protein belongs to the glutamine synthetase family. As to quaternary structure, oligomer of 12 subunits arranged in the form of two hexagons. Mg(2+) is required as a cofactor.

Its subcellular location is the cytoplasm. It catalyses the reaction L-glutamate + NH4(+) + ATP = L-glutamine + ADP + phosphate + H(+). Probably involved in nitrogen metabolism via ammonium assimilation. Catalyzes the ATP-dependent biosynthesis of glutamine from glutamate and ammonia. This is Glutamine synthetase from Methanococcus voltae.